The following is a 58-amino-acid chain: MAKVKITQVVSAIKKTDNQKRVLASLGLGKINSSVEQELTPSIKGMLNKVNHLVVVSE.

This sequence belongs to the universal ribosomal protein uL30 family. In terms of assembly, part of the 50S ribosomal subunit.

The sequence is that of Large ribosomal subunit protein uL30 from Cytophaga hutchinsonii (strain ATCC 33406 / DSM 1761 / CIP 103989 / NBRC 15051 / NCIMB 9469 / D465).